Here is a 229-residue protein sequence, read N- to C-terminus: Cytochrome c oxidase subunit 2 (229 aa).

Over 1 to 26 (MATWMNINLQDANSSTMEQLTMFHDH) the chain is Mitochondrial intermembrane. A helical membrane pass occupies residues 27–48 (TLMILTMITSIVTFIMVSMTTN). Topologically, residues 49–62 (TLINRYLLEGQTIE) are mitochondrial matrix. A helical transmembrane segment spans residues 63–82 (FIWTTIPAITLIFIALPSLH). Over 83 to 229 (LLYLIDEINN…LKWINKSLSS (147 aa)) the chain is Mitochondrial intermembrane. Cu cation is bound by residues His-161, Cys-196, Glu-198, Cys-200, His-204, and Met-207. Glu-198 is a Mg(2+) binding site.

It belongs to the cytochrome c oxidase subunit 2 family. In terms of assembly, component of the cytochrome c oxidase (complex IV, CIV), a multisubunit enzyme composed of a catalytic core of 3 subunits and several supernumerary subunits. The complex exists as a monomer or a dimer and forms supercomplexes (SCs) in the inner mitochondrial membrane with ubiquinol-cytochrome c oxidoreductase (cytochrome b-c1 complex, complex III, CIII). It depends on Cu cation as a cofactor.

The protein resides in the mitochondrion inner membrane. The enzyme catalyses 4 Fe(II)-[cytochrome c] + O2 + 8 H(+)(in) = 4 Fe(III)-[cytochrome c] + 2 H2O + 4 H(+)(out). In terms of biological role, component of the cytochrome c oxidase, the last enzyme in the mitochondrial electron transport chain which drives oxidative phosphorylation. The respiratory chain contains 3 multisubunit complexes succinate dehydrogenase (complex II, CII), ubiquinol-cytochrome c oxidoreductase (cytochrome b-c1 complex, complex III, CIII) and cytochrome c oxidase (complex IV, CIV), that cooperate to transfer electrons derived from NADH and succinate to molecular oxygen, creating an electrochemical gradient over the inner membrane that drives transmembrane transport and the ATP synthase. Cytochrome c oxidase is the component of the respiratory chain that catalyzes the reduction of oxygen to water. Electrons originating from reduced cytochrome c in the intermembrane space (IMS) are transferred via the dinuclear copper A center (CU(A)) of subunit 2 and heme A of subunit 1 to the active site in subunit 1, a binuclear center (BNC) formed by heme A3 and copper B (CU(B)). The BNC reduces molecular oxygen to 2 water molecules using 4 electrons from cytochrome c in the IMS and 4 protons from the mitochondrial matrix. The polypeptide is Cytochrome c oxidase subunit 2 (COII) (Oncopeltus fasciatus (Large milkweed bug)).